Reading from the N-terminus, the 374-residue chain is MSETLNLLKQLIERPSITPNDAGCQTILIDRLKSVGFQCEHLPFGEVHNFWAWHGHQSPFIIFAGHTDVVPPGDETQWHSPPFTPTEKNGYIYGRGAADMKSGLAAMVVAAENFVKQNPDHNGTIGFIVTSDEEGPAENGTQKVVDYLQQKNIKLDYCIVGEASSNEKLGDAIKIGRRGSMHGELTIIGKQGHIAYPHLADNPIHRSFQAFEALAKTKWDEGNEHFTPTSFQFYNVEAGAGAANVIPATLKAKFNFRFAPIHTTQQLQQKVERILNYYQLNYDIQWNVSSQPFFSGNGRLATFVRQAIQEICHLNTEPNTYGGTSDGRFIATTGCEVIELGPVNKTAHHVNENICIADLEKLTDIYFRTLQLLT.

His-66 contributes to the Zn(2+) binding site. Asp-68 is a catalytic residue. Position 99 (Asp-99) interacts with Zn(2+). Catalysis depends on Glu-133, which acts as the Proton acceptor. The Zn(2+) site is built by Glu-134, Glu-162, and His-348.

Belongs to the peptidase M20A family. DapE subfamily. Homodimer. Zn(2+) is required as a cofactor. The cofactor is Co(2+).

It catalyses the reaction N-succinyl-(2S,6S)-2,6-diaminopimelate + H2O = (2S,6S)-2,6-diaminopimelate + succinate. It participates in amino-acid biosynthesis; L-lysine biosynthesis via DAP pathway; LL-2,6-diaminopimelate from (S)-tetrahydrodipicolinate (succinylase route): step 3/3. In terms of biological role, catalyzes the hydrolysis of N-succinyl-L,L-diaminopimelic acid (SDAP), forming succinate and LL-2,6-diaminopimelate (DAP), an intermediate involved in the bacterial biosynthesis of lysine and meso-diaminopimelic acid, an essential component of bacterial cell walls. The polypeptide is Succinyl-diaminopimelate desuccinylase (Coxiella burnetii (strain CbuK_Q154) (Coxiella burnetii (strain Q154))).